Consider the following 498-residue polypeptide: Glutathione synthetase large chain (498 aa).

R128 serves as a coordination point for substrate. ATP is bound at residue E146. Residues E146 and N148 each contribute to the Mg(2+) site. Substrate-binding positions include 150 to 153, 233 to 235, Q239, and 291 to 294; these read ISVS, ERN, and RVGY. K330 contacts ATP. The residue at position 356 (S356) is a Phosphoserine. Residues 387 to 396, Y398, 420 to 423, and E446 contribute to the ATP site; these read KPQREGGGNN and MRYI. E391 lines the Mg(2+) pocket. R473 contacts substrate. K475 and E481 together coordinate ATP. Residue 484 to 485 coordinates substrate; that stretch reads VA.

It belongs to the eukaryotic GSH synthase family. As to quaternary structure, heterodimer composed of a large and a small chain. It depends on Mg(2+) as a cofactor.

It carries out the reaction gamma-L-glutamyl-L-cysteine + glycine + ATP = glutathione + ADP + phosphate + H(+). The protein operates within sulfur metabolism; glutathione biosynthesis; glutathione from L-cysteine and L-glutamate: step 2/2. This Schizosaccharomyces pombe (strain 972 / ATCC 24843) (Fission yeast) protein is Glutathione synthetase large chain (gsa1).